An 81-amino-acid polypeptide reads, in one-letter code: Large ribosomal subunit protein uL29c (81 aa).

It belongs to the universal ribosomal protein uL29 family.

The protein localises to the plastid. It is found in the chloroplast. The polypeptide is Large ribosomal subunit protein uL29c (Phaeodactylum tricornutum (strain CCAP 1055/1)).